Here is a 321-residue protein sequence, read N- to C-terminus: Cytochrome c biogenesis protein CcsA (321 aa).

The next 6 helical transmembrane spans lie at 17-37 (IISIVITIQLIDLLVYQIVGI), 43-63 (KGIIATFFCITGLLITRWIYS), 143-163 (MLLSYAALLCGALLSVAFLVI), 225-245 (VISLGFIFSTIGILSGAVWAN), 258-275 (ETWAFITWTIFAIYLHTR), and 287-307 (IVASIGFLIIWICYFGVNLLG).

It belongs to the CcmF/CycK/Ccl1/NrfE/CcsA family. In terms of assembly, may interact with Ccs1.

It localises to the plastid. The protein localises to the chloroplast thylakoid membrane. Functionally, required during biogenesis of c-type cytochromes (cytochrome c6 and cytochrome f) at the step of heme attachment. This chain is Cytochrome c biogenesis protein CcsA, found in Drimys granadensis.